We begin with the raw amino-acid sequence, 245 residues long: MIIVSRAIVLHNTAYNDSYSIAHLFSRESGRVSYLIPRSSKRGKSGGSLRLLISPLNELEITAEHKQHRDLHFIKEAKLCSLHGRIQSDPVRNSIALFLAEFLYLILRLPEADTNLYDFVAFSIDKLEEMDGPMANFHLAFLFRLLVPLGLIPDLQFGGSVIPRWFDPADGRFVPNAPAHGRGIPPHQSTYLQLFSRITFDNMKAFRLSRAERRQVLDYLVDYYRFHLPPFPLLKTPDILSTLFD.

This sequence belongs to the RecO family.

Its function is as follows. Involved in DNA repair and RecF pathway recombination. This Porphyromonas gingivalis (strain ATCC BAA-308 / W83) protein is DNA repair protein RecO.